Reading from the N-terminus, the 236-residue chain is Ras-related protein RabY (236 aa).

18–25 (GDRKTGKT) contributes to the GTP binding site. Positions 40–48 (YRQTNLLHF) match the Effector region motif. GTP contacts are provided by residues 66-70 (DSQAD) and 126-129 (NKSD). Low complexity predominate over residues 192–225 (QQQQQQQQQQQQQQQQQQQQQQQQQQQQQQQHQQ). Residues 192–236 (QQQQQQQQQQQQQQQQQQQQQQQQQQQQQQQHQQSSKTKIGCLIQ) form a disordered region. The residue at position 233 (cysteine 233) is a Cysteine methyl ester. Cysteine 233 carries S-geranylgeranyl cysteine lipidation. Positions 234–236 (LIQ) are cleaved as a propeptide — removed in mature form.

The protein belongs to the small GTPase superfamily. Rab family.

The protein resides in the cell membrane. The polypeptide is Ras-related protein RabY (rabY) (Dictyostelium discoideum (Social amoeba)).